Here is a 157-residue protein sequence, read N- to C-terminus: UPF0251 protein CLK_0815 (157 aa).

This sequence belongs to the UPF0251 family.

This chain is UPF0251 protein CLK_0815, found in Clostridium botulinum (strain Loch Maree / Type A3).